The following is a 341-amino-acid chain: L-threonine 3-dehydrogenase (341 aa).

C38 serves as a coordination point for Zn(2+). Active-site charge relay system residues include T40 and H43. The Zn(2+) site is built by H63, E64, C93, C96, C99, and C107. NAD(+) is bound by residues I175, D195, R200, 262–264 (LGI), and 286–287 (IY).

The protein belongs to the zinc-containing alcohol dehydrogenase family. Homotetramer. It depends on Zn(2+) as a cofactor.

Its subcellular location is the cytoplasm. The enzyme catalyses L-threonine + NAD(+) = (2S)-2-amino-3-oxobutanoate + NADH + H(+). The protein operates within amino-acid degradation; L-threonine degradation via oxydo-reductase pathway; glycine from L-threonine: step 1/2. Its function is as follows. Catalyzes the NAD(+)-dependent oxidation of L-threonine to 2-amino-3-ketobutyrate. This Shewanella sediminis (strain HAW-EB3) protein is L-threonine 3-dehydrogenase.